Here is a 684-residue protein sequence, read N- to C-terminus: Cleavage and polyadenylation specificity factor subunit 3 (684 aa).

An N-acetylserine modification is found at serine 2. The Zn(2+) site is built by histidine 71, histidine 73, aspartate 75, histidine 76, histidine 158, and aspartate 179. Histidine 396 functions as the Proton donor in the catalytic mechanism. A Zn(2+)-binding site is contributed by histidine 418. Glycyl lysine isopeptide (Lys-Gly) (interchain with G-Cter in SUMO) cross-links involve residues lysine 462, lysine 465, and lysine 545. Serine 659 bears the Phosphoserine mark. Residue threonine 681 is modified to Phosphothreonine.

The protein belongs to the metallo-beta-lactamase superfamily. RNA-metabolizing metallo-beta-lactamase-like family. CPSF3 subfamily. Component of the cleavage and polyadenylation specificity factor (CPSF) complex, composed of CPSF1, CPSF2, CPSF3, CPSF4 and FIP1L1. Interacts with CPSF2, CSTF2 and SYMPK. Interacts with TUT1; the interaction is direct and mediates the recruitment of the CPSF complex on the 3'UTR of pre-mRNAs. Interacts with WDR33. Interacts with ZC3H3. Interacts with ISY1; this interaction is in an RNA independent manner. Interacts with the microprocessor complex subunits DGCR8 and DROSHA; this interaction is in an RNA dependent manner. The cofactor is Zn(2+). Sumoylated on Lys-462, Lys-465 and Lys-545, preferentially by SUMO3.

It localises to the nucleus. In terms of biological role, component of the cleavage and polyadenylation specificity factor (CPSF) complex that plays a key role in pre-mRNA 3'-end formation, recognizing the AAUAAA signal sequence and interacting with poly(A) polymerase and other factors to bring about cleavage and poly(A) addition. Has endonuclease activity, and functions as an mRNA 3'-end-processing endonuclease. Also involved in the histone 3'-end pre-mRNA processing. U7 snRNP-dependent protein that induces both the 3' endoribonucleolytic cleavage of histone pre-mRNAs and acts as a 5' to 3' exonuclease for degrading the subsequent downstream cleavage product (DCP) of mature histone mRNAs. Cleavage occurs after the 5'-ACCCA-3' sequence in the histone pre-mRNA leaving a 3'hydroxyl group on the upstream fragment containing the stem loop (SL) and 5' phosphate on the downstream cleavage product (DCP) starting with CU nucleotides. The U7-dependent 5' to 3' exonuclease activity is processive and degrades the DCP RNA substrate even after complete removal of the U7-binding site. Binds to the downstream cleavage product (DCP) of histone pre-mRNAs and the cleaved DCP RNA substrate in a U7 snRNP dependent manner. Required for the selective processing of microRNAs (miRNAs) during embryonic stem cell differentiation via its interaction with ISY1. Required for entering/progressing through S-phase of the cell cycle. Required for the biogenesis of all miRNAs from the pri-miR-17-92 primary transcript except miR-92a. Only required for the biogenesis of miR-290 and miR-96 from the pri-miR-290-295 and pri-miR-96-183 primary transcripts, respectively. The protein is Cleavage and polyadenylation specificity factor subunit 3 (Cpsf3) of Mus musculus (Mouse).